The chain runs to 685 residues: Keratin, type II cytoskeletal 2 epidermal (685 aa).

The disordered stretch occupies residues 1–20; it reads MSCQISCKSRRGGGGGGGGG. Positions 1–196 are head; it reads MSCQISCKSR…DPEIQNVKSQ (196 aa). R22 is modified (asymmetric dimethylarginine). Phosphoserine is present on residues S25 and S28. R52 is subject to Omega-N-methylarginine. The residue at position 64 (S64) is a Phosphoserine. The coil 1A stretch occupies residues 197–232; it reads EREQIKTLNNKFASFIDTVRFLEQQNQVLHTKWELL. The region spanning 197–511 is the IF rod domain; that stretch reads EREQIKTLNN…KLLEGEECRM (315 aa). Residues 233-251 are linker 1; the sequence is QQLDVGTRTTNLDPVFQAY. Residues 252-343 are coil 1B; sequence IGILKKQVDR…TLYDTELSQL (92 aa). Positions 344 to 367 are linker 12; sequence QQNVTDTNVILSMDNNRNLDLDSI. Positions 368–507 are coil 2; sequence IAEVQSQYEI…ATYRKLLEGE (140 aa). Positions 508 to 685 are tail; that stretch reads ECRMSGDFSD…CGSGVTFSFR (178 aa). The interval 532–685 is disordered; that stretch reads VASKAGFGSG…CGSGVTFSFR (154 aa). Gly residues predominate over residues 538–678; the sequence is FGSGGQSSGG…GSGSGEGCGS (141 aa). An omega-N-methylarginine mark is found at R554, R588, R603, and R653.

The protein belongs to the intermediate filament family. Heterotetramer of two type I and two type II keratins. Associates with KRT10.

It localises to the cytoplasm. In terms of biological role, probably contributes to terminal cornification. Associated with keratinocyte activation, proliferation and keratinization. Required for maintenance of corneocytes and keratin filaments in suprabasal keratinocytes in the epidermis of the ear, potentially via moderation of expression and localization of keratins and their partner proteins. Plays a role in the establishment of the epidermal barrier on plantar skin. In Rattus norvegicus (Rat), this protein is Keratin, type II cytoskeletal 2 epidermal.